The primary structure comprises 480 residues: UDP-N-acetylmuramoylalanine--D-glutamate ligase (480 aa).

Glycine 120–threonine 126 serves as a coordination point for ATP.

The protein belongs to the MurCDEF family.

Its subcellular location is the cytoplasm. The catalysed reaction is UDP-N-acetyl-alpha-D-muramoyl-L-alanine + D-glutamate + ATP = UDP-N-acetyl-alpha-D-muramoyl-L-alanyl-D-glutamate + ADP + phosphate + H(+). It functions in the pathway cell wall biogenesis; peptidoglycan biosynthesis. Cell wall formation. Catalyzes the addition of glutamate to the nucleotide precursor UDP-N-acetylmuramoyl-L-alanine (UMA). The protein is UDP-N-acetylmuramoylalanine--D-glutamate ligase of Nocardia farcinica (strain IFM 10152).